The chain runs to 153 residues: UPF0756 membrane protein LCA_1031 (153 aa).

The next 4 membrane-spanning stretches (helical) occupy residues 4–24, 52–72, 85–105, and 115–135; these read WLFL…SLII, WGVT…QIGF, FIAV…VGLL, and LVFG…GPVI.

Belongs to the UPF0756 family.

Its subcellular location is the cell membrane. The protein is UPF0756 membrane protein LCA_1031 of Latilactobacillus sakei subsp. sakei (strain 23K) (Lactobacillus sakei subsp. sakei).